A 445-amino-acid polypeptide reads, in one-letter code: tRNA-2-methylthio-N(6)-dimethylallyladenosine synthase (445 aa).

The MTTase N-terminal domain occupies 7 to 121 (KTFYIETFGC…LPEMLVQLEA (115 aa)). 6 residues coordinate [4Fe-4S] cluster: Cys-16, Cys-52, Cys-84, Cys-158, Cys-162, and Cys-165. The region spanning 144–374 (RDNPHRAYLT…QEKQRAIQIR (231 aa)) is the Radical SAM core domain. The 67-residue stretch at 377–443 (AEMIGSIQEV…PNSLVGESAA (67 aa)) folds into the TRAM domain.

This sequence belongs to the methylthiotransferase family. MiaB subfamily. As to quaternary structure, monomer. Requires [4Fe-4S] cluster as cofactor.

The protein resides in the cytoplasm. The enzyme catalyses N(6)-dimethylallyladenosine(37) in tRNA + (sulfur carrier)-SH + AH2 + 2 S-adenosyl-L-methionine = 2-methylsulfanyl-N(6)-dimethylallyladenosine(37) in tRNA + (sulfur carrier)-H + 5'-deoxyadenosine + L-methionine + A + S-adenosyl-L-homocysteine + 2 H(+). Catalyzes the methylthiolation of N6-(dimethylallyl)adenosine (i(6)A), leading to the formation of 2-methylthio-N6-(dimethylallyl)adenosine (ms(2)i(6)A) at position 37 in tRNAs that read codons beginning with uridine. In Solibacter usitatus (strain Ellin6076), this protein is tRNA-2-methylthio-N(6)-dimethylallyladenosine synthase.